Here is a 498-residue protein sequence, read N- to C-terminus: Putative BTB/POZ domain-containing protein L67 (498 aa).

The BTB domain occupies 26-96 (SDINITLSDN…MYGISLSEIN (71 aa)).

The protein belongs to the mimivirus BTB/WD family.

The protein is Putative BTB/POZ domain-containing protein L67 of Acanthamoeba polyphaga (Amoeba).